The primary structure comprises 127 residues: Large ribosomal subunit protein eL24 (127 aa).

Residues 93–127 (KRAQKPEVKQAAAEQAKREIKEKKKAAAKKAAPKK) form a disordered region. Residues 115–127 (KKKAAAKKAAPKK) are compositionally biased toward basic residues.

Belongs to the eukaryotic ribosomal protein eL24 family.

The chain is Large ribosomal subunit protein eL24 (rpl24) from Dictyostelium discoideum (Social amoeba).